Here is a 159-residue protein sequence, read N- to C-terminus: ATP synthase subunit b 2 (159 aa).

The helical transmembrane segment at 1 to 21 (MDATFWAFIALVIFVAIVVYM) threads the bilayer.

It belongs to the ATPase B chain family. In terms of assembly, F-type ATPases have 2 components, F(1) - the catalytic core - and F(0) - the membrane proton channel. F(1) has five subunits: alpha(3), beta(3), gamma(1), delta(1), epsilon(1). F(0) has three main subunits: a(1), b(2) and c(10-14). The alpha and beta chains form an alternating ring which encloses part of the gamma chain. F(1) is attached to F(0) by a central stalk formed by the gamma and epsilon chains, while a peripheral stalk is formed by the delta and b chains.

The protein localises to the cell inner membrane. In terms of biological role, f(1)F(0) ATP synthase produces ATP from ADP in the presence of a proton or sodium gradient. F-type ATPases consist of two structural domains, F(1) containing the extramembraneous catalytic core and F(0) containing the membrane proton channel, linked together by a central stalk and a peripheral stalk. During catalysis, ATP synthesis in the catalytic domain of F(1) is coupled via a rotary mechanism of the central stalk subunits to proton translocation. Component of the F(0) channel, it forms part of the peripheral stalk, linking F(1) to F(0). The sequence is that of ATP synthase subunit b 2 from Brucella ovis (strain ATCC 25840 / 63/290 / NCTC 10512).